A 286-amino-acid polypeptide reads, in one-letter code: uncharacterized protein (286 aa).

The next 2 helical transmembrane spans lie at 201-221 and 231-251; these read VIYS…LCET and AIIL…YLMM.

It localises to the cell membrane. This is an uncharacterized protein from Methanocaldococcus jannaschii (strain ATCC 43067 / DSM 2661 / JAL-1 / JCM 10045 / NBRC 100440) (Methanococcus jannaschii).